We begin with the raw amino-acid sequence, 480 residues long: Chromosomal replication initiator protein DnaA (480 aa).

The tract at residues 1 to 73 (MNQDFWPFCL…GELGEEFHGQ (73 aa)) is domain I, interacts with DnaA modulators. The segment at 73–143 (QPIQLELQLP…SANELAYDKT (71 aa)) is domain II. The interval 144-360 (RLNADFTFDT…GALNKVVAYA (217 aa)) is domain III, AAA+ region. Glycine 188, glycine 190, lysine 191, and threonine 192 together coordinate ATP. A domain IV, binds dsDNA region spans residues 361 to 480 (RFHGRGISLE…VHVLTQVLRG (120 aa)).

It belongs to the DnaA family. As to quaternary structure, oligomerizes as a right-handed, spiral filament on DNA at oriC.

It is found in the cytoplasm. In terms of biological role, plays an essential role in the initiation and regulation of chromosomal replication. ATP-DnaA binds to the origin of replication (oriC) to initiate formation of the DNA replication initiation complex once per cell cycle. Binds the DnaA box (a 9 base pair repeat at the origin) and separates the double-stranded (ds)DNA. Forms a right-handed helical filament on oriC DNA; dsDNA binds to the exterior of the filament while single-stranded (ss)DNA is stabiized in the filament's interior. The ATP-DnaA-oriC complex binds and stabilizes one strand of the AT-rich DNA unwinding element (DUE), permitting loading of DNA polymerase. After initiation quickly degrades to an ADP-DnaA complex that is not apt for DNA replication. Binds acidic phospholipids. This is Chromosomal replication initiator protein DnaA from Azoarcus sp. (strain BH72).